Consider the following 500-residue polypeptide: Probable cytosol aminopeptidase (500 aa).

2 residues coordinate Mn(2+): Lys264 and Asp269. Residue Lys276 is part of the active site. Mn(2+) is bound by residues Asp287, Asp346, and Glu348. Arg350 is an active-site residue.

It belongs to the peptidase M17 family. Mn(2+) serves as cofactor.

It localises to the cytoplasm. It catalyses the reaction Release of an N-terminal amino acid, Xaa-|-Yaa-, in which Xaa is preferably Leu, but may be other amino acids including Pro although not Arg or Lys, and Yaa may be Pro. Amino acid amides and methyl esters are also readily hydrolyzed, but rates on arylamides are exceedingly low.. It carries out the reaction Release of an N-terminal amino acid, preferentially leucine, but not glutamic or aspartic acids.. Functionally, presumably involved in the processing and regular turnover of intracellular proteins. Catalyzes the removal of unsubstituted N-terminal amino acids from various peptides. The sequence is that of Probable cytosol aminopeptidase from Rickettsia canadensis (strain McKiel).